A 329-amino-acid chain; its full sequence is Prostaglandin reductase 1 (329 aa).

Residue Thr18 is modified to Phosphothreonine. Ser20 carries the post-translational modification Phosphoserine. NADP(+) contacts are provided by residues 152 to 155, Lys178, Tyr193, Asn217, 239 to 245, 270 to 272, and Asn321; these read GAVG, CGAISQY, and FIV. Lys178 carries the N6-(2-hydroxyisobutyryl)lysine; alternate modification. N6-acetyllysine; alternate is present on Lys178.

This sequence belongs to the NADP-dependent oxidoreductase L4BD family. Monomer or homodimer.

The protein localises to the cytoplasm. It catalyses the reaction 13,14-dihydro-15-oxo-prostaglandin E1 + NADP(+) = 15-oxoprostaglandin E1 + NADPH + H(+). It carries out the reaction 13,14-dihydro-15-oxo-prostaglandin E2 + NADP(+) = 15-oxoprostaglandin E2 + NADPH + H(+). The catalysed reaction is 13,14-dihydro-15-oxo-prostaglandin F1alpha + NADP(+) = 15-oxoprostaglandin F1alpha + NADPH + H(+). The enzyme catalyses 13,14-dihydro-15-oxo-PGF2alpha + NADP(+) = 15-oxoprostaglandin F2alpha + NADPH + H(+). It catalyses the reaction leukotriene B4 + NADP(+) = 12-oxo-leukotriene B4 + NADPH + H(+). It carries out the reaction 20-hydroxy-leukotriene B4 + NADP(+) = 12-oxo-20-hydroxy-leukotriene B4 + NADPH + H(+). The catalysed reaction is 6-trans-leukotriene B4 + NADP(+) = 12-oxo-(5S)-hydroxy-(6E,8E,10E,14Z)-eicosatetraenoate + NADPH + H(+). The enzyme catalyses (5S,12S)-dihydroxy-(6E,10E,12E,14Z)-eicosatetraenoate + NADP(+) = 12-oxo-(5S)-hydroxy-(6E,8E,10E,14Z)-eicosatetraenoate + NADPH + H(+). It catalyses the reaction an n-alkanal + NADP(+) = an alk-2-enal + NADPH + H(+). It carries out the reaction hexanal + NADP(+) = (E)-hex-2-enal + NADPH + H(+). The catalysed reaction is octanal + NADP(+) = (2E)-octenal + NADPH + H(+). The enzyme catalyses decanal + NADP(+) = (2E)-decenal + NADPH + H(+). It catalyses the reaction dodecanal + NADP(+) = (2E)-dodecenal + NADPH + H(+). It carries out the reaction 4-hydroxynonanal + NADP(+) = (E)-4-hydroxynon-2-enal + NADPH + H(+). The catalysed reaction is pentan-2-one + NADP(+) = (E)-pent-3-en-2-one + NADPH + H(+). The enzyme catalyses nonan-2-one + NADP(+) = (3E)-nonen-2-one + NADPH + H(+). In terms of biological role, NAD(P)H-dependent oxidoreductase involved in metabolic inactivation of pro- and anti-inflammatory eicosanoids: prostaglandins (PG), leukotrienes (LT) and lipoxins (LX). Catalyzes with high efficiency the reduction of the 13,14 double bond of 15-oxoPGs, including 15-oxo-PGE1, 15-oxo-PGE2, 15-oxo-PGF1-alpha and 15-oxo-PGF2-alpha. Catalyzes with lower efficiency the oxidation of the hydroxyl group at C12 of LTB4 and its derivatives, converting them into biologically less active 12-oxo-LTB4 metabolites. Reduces 15-oxo-LXA4 to 13,14 dihydro-15-oxo-LXA4, enhancing neutrophil recruitment at the inflammatory site. Plays a role in metabolic detoxification of alkenals and ketones. Reduces alpha,beta-unsaturated alkenals and ketones, particularly those with medium-chain length, showing highest affinity toward (2E)-decenal and (3E)-3-nonen-2-one. Inactivates 4-hydroxy-2-nonenal, a cytotoxic lipid constituent of oxidized low-density lipoprotein particles. The chain is Prostaglandin reductase 1 (Ptgr1) from Rattus norvegicus (Rat).